Consider the following 195-residue polypeptide: 3-isopropylmalate dehydratase small subunit (195 aa).

Belongs to the LeuD family. LeuD type 1 subfamily. Heterodimer of LeuC and LeuD.

The catalysed reaction is (2R,3S)-3-isopropylmalate = (2S)-2-isopropylmalate. It participates in amino-acid biosynthesis; L-leucine biosynthesis; L-leucine from 3-methyl-2-oxobutanoate: step 2/4. Its function is as follows. Catalyzes the isomerization between 2-isopropylmalate and 3-isopropylmalate, via the formation of 2-isopropylmaleate. The polypeptide is 3-isopropylmalate dehydratase small subunit (Corynebacterium kroppenstedtii (strain DSM 44385 / JCM 11950 / CIP 105744 / CCUG 35717)).